Reading from the N-terminus, the 138-residue chain is Histone H2B (138 aa).

The span at 1–10 (MPPKAAEKKP) shows a compositional bias: basic and acidic residues. The tract at residues 1–47 (MPPKAAEKKPSTAGKAPAGKAPEKKEAGKKTTAAGGEKKKRSKTRKE) is disordered. An N6-acetyllysine; alternate mark is found at K8 and K9. Residues K8 and K9 each participate in a glycyl lysine isopeptide (Lys-Gly) (interchain with G-Cter in SUMO); alternate cross-link. A compositionally biased stretch (low complexity) spans 11-20 (STAGKAPAGK). K15 is subject to N6-acetyllysine. The residue at position 24 (K24) is an N6-acetyllysine; alternate. A Glycyl lysine isopeptide (Lys-Gly) (interchain with G-Cter in SUMO); alternate cross-link involves residue K24. K25 is covalently cross-linked (Glycyl lysine isopeptide (Lys-Gly) (interchain with G-Cter in SUMO)). K132 is covalently cross-linked (Glycyl lysine isopeptide (Lys-Gly) (interchain with G-Cter in ubiquitin)).

The protein belongs to the histone H2B family. As to quaternary structure, the nucleosome is a histone octamer containing two molecules each of H2A, H2B, H3 and H4 assembled in one H3-H4 heterotetramer and two H2A-H2B heterodimers. The octamer wraps approximately 147 bp of DNA. Monoubiquitinated to form H2BK123ub1. H2BK123ub1 gives a specific tag for epigenetic transcriptional activation and is also prerequisite for H3K4me and H3K79me formation. H2BK123ub1 also modulates the formation of double-strand breaks during meiosis and is a prerequisite for DNA-damage checkpoint activation. In terms of processing, acetylated by GCN5 to form H2BK11ac and H2BK16ac. H2BK16ac can also be formed by ESA1. Acetylation of N-terminal lysines and particularly formation of H2BK11acK16ac has a positive effect on transcription. Post-translationally, sumoylation to form H2BK6su or H2BK7su, and probably also H2BK16su or H2BK17su, occurs preferentially near the telomeres and represses gene transcription.

Its subcellular location is the nucleus. The protein resides in the chromosome. Its function is as follows. Core component of nucleosome. Nucleosomes wrap and compact DNA into chromatin, limiting DNA accessibility to the cellular machineries which require DNA as a template. Histones thereby play a central role in transcription regulation, DNA repair, DNA replication and chromosomal stability. DNA accessibility is regulated via a complex set of post-translational modifications of histones, also called histone code, and nucleosome remodeling. In Ajellomyces capsulatus (Darling's disease fungus), this protein is Histone H2B (HTB1).